We begin with the raw amino-acid sequence, 371 residues long: MKTKAAVLHSAGKPFEIEELELDGPREGEVLIKYTAAGLCHSDLHLIDNDLVPRFPIVGGHEGAGVIEDVGPGVTKVKPGDHVVCSFIPNCGTCRYCATGRSNLCDMGATILDGGMPDGSFRFHRGGTDYGAMCMLGTFSERATISQHSVVKVDDWLPLETAVLVGCGVPTGWASANYAGGVRAGDTCVVYGIGGIGINAVQGAAHAGAANVIAVDPVAFKREKALELGATHAFASADEAAAKVAELTWGQMADQALITVGTVVEQVVTDAFNVIGKGGTVVITGLANPEKLTVHLSGGVMTLFEKTVKGTLFGSANPQYDIVRLLRLYQAGHVKLDELVTKRYSLEEVNEGYQDLRDGKNIRGVIMHSAD.

The Zn(2+) site is built by Cys-40, His-61, Cys-91, Cys-94, Cys-97, Cys-105, and Cys-167.

It belongs to the zinc-containing alcohol dehydrogenase family. In terms of assembly, homotrimer. It depends on NADH as a cofactor.

The catalysed reaction is N,N-dimethyl-4-nitrosoaniline + a primary alcohol = 4-(hydroxylamino)-N,N-dimethylaniline + an aldehyde. The enzyme catalyses ethanol + A = acetaldehyde + AH2. With respect to regulation, inhibited by trans-4-(N,N-dimethylamino)-cinnamaldehyde through direct binding to the catalytic zinc ion in a substrate-like geometry. Isobutyramide acts as a competitive inhibitor with respect to the electron acceptor NDMA. Acetaldehyde, AMP, ADP, ATP, as well as CuSO(4), FeSO(4), HgCl(2), NiCl(2), ZnSO(4), KCN, and NaN(3) are additional inhibitors of the catalytic activity. Catalytically different from common alcohol dehydrogenases. Effective in oxidizing ethanol, other primary alcohols and benzylalcohol only in the presence of p-nitroso-N,N-dimethylaniline (NDMA) as an electron acceptor. NADH acts as a cofactor here instead as a coenzyme. This chain is NDMA-dependent alcohol dehydrogenase, found in Amycolatopsis methanolica.